A 206-amino-acid chain; its full sequence is Large ribosomal subunit protein uL4 (206 aa).

The segment at 47-77 (GTQSTKTRSEVRGGGIKPWRQKGTGRARQGS) is disordered.

It belongs to the universal ribosomal protein uL4 family. In terms of assembly, part of the 50S ribosomal subunit.

One of the primary rRNA binding proteins, this protein initially binds near the 5'-end of the 23S rRNA. It is important during the early stages of 50S assembly. It makes multiple contacts with different domains of the 23S rRNA in the assembled 50S subunit and ribosome. In terms of biological role, forms part of the polypeptide exit tunnel. The sequence is that of Large ribosomal subunit protein uL4 from Clostridium beijerinckii (strain ATCC 51743 / NCIMB 8052) (Clostridium acetobutylicum).